A 195-amino-acid chain; its full sequence is Probable GTP-binding protein EngB (195 aa).

The EngB-type G domain occupies 24–195 (DWPEIALAGR…EAWTAILKYL (172 aa)). GTP is bound by residues 32–39 (GRSNVGKS), 59–63 (GKTQL), 77–80 (DVPG), 144–147 (TKAD), and 176–178 (FSS). Mg(2+)-binding residues include Ser39 and Thr61.

The protein belongs to the TRAFAC class TrmE-Era-EngA-EngB-Septin-like GTPase superfamily. EngB GTPase family. The cofactor is Mg(2+).

In terms of biological role, necessary for normal cell division and for the maintenance of normal septation. This Lactococcus lactis subsp. cremoris (strain MG1363) protein is Probable GTP-binding protein EngB.